We begin with the raw amino-acid sequence, 166 residues long: Small ribosomal subunit protein uS5 (166 aa).

An S5 DRBM domain is found at 12 to 75 (YIEKLVQVNR…EAARRNMIQV (64 aa)).

The protein belongs to the universal ribosomal protein uS5 family. In terms of assembly, part of the 30S ribosomal subunit. Contacts proteins S4 and S8.

Its function is as follows. With S4 and S12 plays an important role in translational accuracy. In terms of biological role, located at the back of the 30S subunit body where it stabilizes the conformation of the head with respect to the body. This chain is Small ribosomal subunit protein uS5, found in Pseudomonas fluorescens (strain Pf0-1).